Reading from the N-terminus, the 345-residue chain is Ubiquinone biosynthesis O-methyltransferase, mitochondrial (345 aa).

The N-terminal 86 residues, 1-86, are a transit peptide targeting the mitochondrion; it reads MWRGGRLSSR…TYRSSWKKLY (86 aa). Arginine 124 is an S-adenosyl-L-methionine binding site. 2 positions are modified to N6-acetyllysine: lysine 143 and lysine 149. Residues glycine 154 and aspartate 175 each coordinate S-adenosyl-L-methionine. Position 196 is an N6-acetyllysine (lysine 196). Position 222 (serine 222) interacts with S-adenosyl-L-methionine. 3 residues coordinate Mg(2+): glutamate 223, glutamate 226, and histidine 227.

It belongs to the class I-like SAM-binding methyltransferase superfamily. UbiG/COQ3 family. In terms of assembly, component of a multi-subunit COQ enzyme complex, composed of at least COQ3, COQ4, COQ5, COQ6, COQ7 and COQ9. The cofactor is Mg(2+).

The protein localises to the mitochondrion inner membrane. The enzyme catalyses 3,4-dihydroxy-5-(all-trans-decaprenyl)benzoate + S-adenosyl-L-methionine = 4-hydroxy-3-methoxy-5-(all-trans-decaprenyl)benzoate + S-adenosyl-L-homocysteine + H(+). It catalyses the reaction a 3-demethylubiquinone + S-adenosyl-L-methionine = a ubiquinone + S-adenosyl-L-homocysteine. It carries out the reaction 3-demethylubiquinol-10 + S-adenosyl-L-methionine = ubiquinol-10 + S-adenosyl-L-homocysteine + H(+). It participates in cofactor biosynthesis; ubiquinone biosynthesis. Functionally, O-methyltransferase required for two non-consecutive steps during ubiquinone biosynthesis. Catalyzes the 2 O-methylation of 3,4-dihydroxy-5-(all-trans-decaprenyl)benzoic acid into 4-hydroxy-3-methoxy-5-(all-trans-decaprenyl)benzoic acid. Also catalyzes the last step of ubiquinone biosynthesis by mediating methylation of 3-demethylubiquinone into ubiquinone. Also able to mediate the methylation of 3-demethylubiquinol-10 into ubiquinol-10. In Rattus norvegicus (Rat), this protein is Ubiquinone biosynthesis O-methyltransferase, mitochondrial.